The following is a 246-amino-acid chain: MGAPLRHCLLVAAALSLGCGVAAADPGYVANVIPCEQRTLVLSAFPAEADAVLAHTALDANPVVVADRRRYYLGSISGKKVIVAMTGIGLVNATNTTETAFARFTCASSIAIAAVMFSGVAGGAGRTSIGDVAIPARWTLDNGATFRGVDPGMLATAQTLSVVLDNINTLGNPVCLCRNVPVVRLNHLGRQPQLFVGGDGSSSDKNNGQAFPCIPNGGSVFAANPVVHPIAHLAIPVTFSRRRDPG.

Positions 1–24 (MGAPLRHCLLVAAALSLGCGVAAA) are cleaved as a signal peptide. 2 consecutive transmembrane segments (helical) span residues 71 to 91 (YYLGSISGKKVIVAMTGIGLV) and 104 to 124 (FTCASSIAIAAVMFSGVAGGA).

The protein resides in the cell membrane. This is an uncharacterized protein from Mycobacterium tuberculosis (strain ATCC 25618 / H37Rv).